We begin with the raw amino-acid sequence, 248 residues long: Ubiquinone/menaquinone biosynthesis C-methyltransferase UbiE (248 aa).

The S-adenosyl-L-methionine site is built by S68 and D92.

This sequence belongs to the class I-like SAM-binding methyltransferase superfamily. MenG/UbiE family.

It carries out the reaction a 2-demethylmenaquinol + S-adenosyl-L-methionine = a menaquinol + S-adenosyl-L-homocysteine + H(+). The catalysed reaction is a 2-methoxy-6-(all-trans-polyprenyl)benzene-1,4-diol + S-adenosyl-L-methionine = a 5-methoxy-2-methyl-3-(all-trans-polyprenyl)benzene-1,4-diol + S-adenosyl-L-homocysteine + H(+). Its pathway is quinol/quinone metabolism; menaquinone biosynthesis; menaquinol from 1,4-dihydroxy-2-naphthoate: step 2/2. It functions in the pathway cofactor biosynthesis; ubiquinone biosynthesis. Methyltransferase required for the conversion of demethylmenaquinol (DMKH2) to menaquinol (MKH2) and the conversion of 2-polyprenyl-6-methoxy-1,4-benzoquinol (DDMQH2) to 2-polyprenyl-3-methyl-6-methoxy-1,4-benzoquinol (DMQH2). The chain is Ubiquinone/menaquinone biosynthesis C-methyltransferase UbiE from Rickettsia felis (strain ATCC VR-1525 / URRWXCal2) (Rickettsia azadi).